Consider the following 89-residue polypeptide: uncharacterized protein (89 aa).

This is an uncharacterized protein from Dictyostelium discoideum (Social amoeba).